Here is a 1414-residue protein sequence, read N- to C-terminus: Protein KATNIP homolog (1414 aa).

7 disordered regions span residues 1–32, 80–116, 139–158, 712–731, 756–783, 823–861, and 924–943; these read MHGK…DEKH, QQST…PGKI, GPNT…NEDQ, VSAT…NDLT, SSSS…TFTN, KMDN…SEKY, and QQQK…SLMP. Composition is skewed to basic and acidic residues over residues 10-32 and 86-101; these read RKND…DEKH and LARE…DDGC. The span at 147–158 shows a compositional bias: acidic residues; that stretch reads DFESDDDMNEDQ. 2 stretches are compositionally biased toward polar residues: residues 832-843 and 924-940; these read NFSNQSSYNSDR and QQQK…NGSS.

The protein resides in the cytoplasm. It localises to the cytoskeleton. Its subcellular location is the cilium axoneme. The protein localises to the cilium basal body. Its function is as follows. May control cilium integrity. This is Protein KATNIP homolog from Xenopus laevis (African clawed frog).